Here is a 275-residue protein sequence, read N- to C-terminus: Dermonecrotic toxin SpeSicTox-betaIIA2v (275 aa).

The active site involves His-5. 2 residues coordinate Mg(2+): Glu-25 and Asp-27. His-41 (nucleophile) is an active-site residue. 2 cysteine pairs are disulfide-bonded: Cys-45/Cys-51 and Cys-47/Cys-190. Position 85 (Asp-85) interacts with Mg(2+).

Belongs to the arthropod phospholipase D family. Class II subfamily. Requires Mg(2+) as cofactor. As to expression, expressed by the venom gland.

The protein resides in the secreted. The enzyme catalyses an N-(acyl)-sphingosylphosphocholine = an N-(acyl)-sphingosyl-1,3-cyclic phosphate + choline. It carries out the reaction an N-(acyl)-sphingosylphosphoethanolamine = an N-(acyl)-sphingosyl-1,3-cyclic phosphate + ethanolamine. The catalysed reaction is a 1-acyl-sn-glycero-3-phosphocholine = a 1-acyl-sn-glycero-2,3-cyclic phosphate + choline. It catalyses the reaction a 1-acyl-sn-glycero-3-phosphoethanolamine = a 1-acyl-sn-glycero-2,3-cyclic phosphate + ethanolamine. Its function is as follows. Dermonecrotic toxins cleave the phosphodiester linkage between the phosphate and headgroup of certain phospholipids (sphingolipid and lysolipid substrates), forming an alcohol (often choline) and a cyclic phosphate. This toxin acts on sphingomyelin (SM). It may also act on ceramide phosphoethanolamine (CPE), lysophosphatidylcholine (LPC) and lysophosphatidylethanolamine (LPE), but not on lysophosphatidylserine (LPS), and lysophosphatidylglycerol (LPG). It acts by transphosphatidylation, releasing exclusively cyclic phosphate products as second products. Induces dermonecrosis, hemolysis, increased vascular permeability, edema, inflammatory response, and platelet aggregation. The protein is Dermonecrotic toxin SpeSicTox-betaIIA2v of Sicarius peruensis (Six-eyed sand spider).